A 67-amino-acid chain; its full sequence is Large ribosomal subunit protein bL35 (67 aa).

Basic residues predominate over residues 1–16 (MPKMKTKSSAKKRFRV). The interval 1 to 23 (MPKMKTKSSAKKRFRVRPGGTVK) is disordered.

It belongs to the bacterial ribosomal protein bL35 family.

The protein is Large ribosomal subunit protein bL35 of Variovorax paradoxus (strain S110).